A 365-amino-acid polypeptide reads, in one-letter code: Chorismate synthase (365 aa).

Positions 48 and 54 each coordinate NADP(+). FMN is bound by residues 125-127 (RSS), 238-239 (NA), A278, 293-297 (KPTSS), and R319.

Belongs to the chorismate synthase family. In terms of assembly, homotetramer. The cofactor is FMNH2.

It catalyses the reaction 5-O-(1-carboxyvinyl)-3-phosphoshikimate = chorismate + phosphate. The protein operates within metabolic intermediate biosynthesis; chorismate biosynthesis; chorismate from D-erythrose 4-phosphate and phosphoenolpyruvate: step 7/7. Catalyzes the anti-1,4-elimination of the C-3 phosphate and the C-6 proR hydrogen from 5-enolpyruvylshikimate-3-phosphate (EPSP) to yield chorismate, which is the branch point compound that serves as the starting substrate for the three terminal pathways of aromatic amino acid biosynthesis. This reaction introduces a second double bond into the aromatic ring system. The protein is Chorismate synthase of Pseudoalteromonas translucida (strain TAC 125).